A 338-amino-acid polypeptide reads, in one-letter code: Nicotinate-nucleotide--dimethylbenzimidazole phosphoribosyltransferase (338 aa).

Glu306 acts as the Proton acceptor in catalysis.

This sequence belongs to the CobT family.

It catalyses the reaction 5,6-dimethylbenzimidazole + nicotinate beta-D-ribonucleotide = alpha-ribazole 5'-phosphate + nicotinate + H(+). Its pathway is nucleoside biosynthesis; alpha-ribazole biosynthesis; alpha-ribazole from 5,6-dimethylbenzimidazole: step 1/2. Catalyzes the synthesis of alpha-ribazole-5'-phosphate from nicotinate mononucleotide (NAMN) and 5,6-dimethylbenzimidazole (DMB). The sequence is that of Nicotinate-nucleotide--dimethylbenzimidazole phosphoribosyltransferase from Cereibacter sphaeroides (strain ATCC 17023 / DSM 158 / JCM 6121 / CCUG 31486 / LMG 2827 / NBRC 12203 / NCIMB 8253 / ATH 2.4.1.) (Rhodobacter sphaeroides).